Consider the following 92-residue polypeptide: Small ribosomal subunit protein bS20 (92 aa).

The disordered stretch occupies residues 1–24 (MANSAQARKRARQAAKANSHNSAL).

It belongs to the bacterial ribosomal protein bS20 family.

Functionally, binds directly to 16S ribosomal RNA. This chain is Small ribosomal subunit protein bS20, found in Paraburkholderia xenovorans (strain LB400).